Reading from the N-terminus, the 692-residue chain is Single-strand DNA endonuclease ASTE1 (692 aa).

It belongs to the asteroid family.

In terms of biological role, structure-specific DNA endonuclease that specifically cleaves single-stranded DNA and 3' overhang DNA. This chain is Single-strand DNA endonuclease ASTE1 (aste1a), found in Danio rerio (Zebrafish).